The chain runs to 459 residues: Cell division protein FtsZ (459 aa).

GTP is bound by residues 25-29 (GAGSN), 112-114 (GTG), glutamate 143, arginine 147, and aspartate 191. 2 disordered regions span residues 383–405 (DQAPNSTNDDMEPRVSLTNDAGE) and 427–459 (IPERKNVVVGMPDEETKESDIHDIPAFLRKKRD).

It belongs to the FtsZ family. Homodimer. Polymerizes to form a dynamic ring structure in a strictly GTP-dependent manner. Interacts directly with several other division proteins.

The protein resides in the cytoplasm. Functionally, essential cell division protein that forms a contractile ring structure (Z ring) at the future cell division site. The regulation of the ring assembly controls the timing and the location of cell division. One of the functions of the FtsZ ring is to recruit other cell division proteins to the septum to produce a new cell wall between the dividing cells. Binds GTP and shows GTPase activity. The sequence is that of Cell division protein FtsZ from Rickettsia bellii (strain RML369-C).